The primary structure comprises 98 residues: Putative defensin-like protein 239 (98 aa).

The N-terminal stretch at 1 to 23 is a signal peptide; the sequence is MRYTTSFIGLCFLIFLLKNLVNG. Disulfide bonds link cysteine 29–cysteine 89, cysteine 39–cysteine 69, cysteine 47–cysteine 86, and cysteine 67–cysteine 88.

This sequence belongs to the DEFL family.

The protein localises to the secreted. The sequence is that of Putative defensin-like protein 239 (SCRL17) from Arabidopsis thaliana (Mouse-ear cress).